Reading from the N-terminus, the 109-residue chain is Staphostatin B (109 aa).

The binds to staphopain B stretch occupies residues 97–101 (IGTSR).

The protein belongs to the protease inhibitor I57 (SspC) family. Forms a stable non-covalent complex with prematurely activated/folded SspB.

Its subcellular location is the cytoplasm. In terms of biological role, specifically inhibits the cysteine protease staphopain B (SspB) by blocking the active site of the enzyme. Probably required to protect cytoplasmic proteins from being degraded by prematurely activated/folded prostaphopain B. Also involved in growth capacity, viability and bacterial morphology. This chain is Staphostatin B (sspC), found in Staphylococcus aureus (strain NCTC 8325 / PS 47).